Here is a 318-residue protein sequence, read N- to C-terminus: NADH-ubiquinone oxidoreductase chain 1 (318 aa).

8 consecutive transmembrane segments (helical) span residues 1–21 (MLPITNSLTYIIPILIAVAFL), 71–91 (LLILSPILALTTAMLIWTPIP), 101–121 (LGLLSILAISSMAVNSTLWAG), 145–165 (VTLGIILLSILILTGGFTMQL), 172–192 (HIWLLTTSWPLTMMWFISTLA), 224–244 (FFLAEYTNIISMNLLTCIMFI), 253–273 (ELFLINLVTKTLLLSLTFLWI), and 294–314 (LPLTMALCLLQASLLVSISGI).

The protein belongs to the complex I subunit 1 family.

It localises to the mitochondrion inner membrane. It catalyses the reaction a ubiquinone + NADH + 5 H(+)(in) = a ubiquinol + NAD(+) + 4 H(+)(out). Its function is as follows. Core subunit of the mitochondrial membrane respiratory chain NADH dehydrogenase (Complex I) that is believed to belong to the minimal assembly required for catalysis. Complex I functions in the transfer of electrons from NADH to the respiratory chain. The immediate electron acceptor for the enzyme is believed to be ubiquinone. This Varanus rudicollis (Rough-necked monitor lizard) protein is NADH-ubiquinone oxidoreductase chain 1 (MT-ND1).